Here is a 196-residue protein sequence, read N- to C-terminus: uncharacterized protein (196 aa).

This is an uncharacterized protein from Caenorhabditis elegans.